Consider the following 301-residue polypeptide: m7GpppX diphosphatase (301 aa).

Substrate is bound by residues glutamate 154, lysine 176, and 237-248 (HYQPSFYHLHVH). The short motif at 244–248 (HLHVH) is the Histidine triad motif element. Histidine 246 functions as the Nucleophile in the catalytic mechanism.

The protein belongs to the HIT family.

The protein resides in the nucleus. The enzyme catalyses a 5'-end (N(7)-methyl 5'-triphosphoguanosine)-ribonucleoside in mRNA + H2O = N(7)-methyl-GMP + a 5'-end diphospho-ribonucleoside in mRNA + 2 H(+). It carries out the reaction a 5'-end (N(2),N(2),N(7)-trimethyl 5'-triphosphoguanosine)-ribonucleoside in mRNA + H2O = (N(2),N(2),N(7))-trimethyl-GMP + a 5'-end diphospho-ribonucleoside in mRNA + 2 H(+). With respect to regulation, the hydrolytic product 7-methylguanosine diphosphate (m7GDP) efficiently inhibits the decapping scavenger activity and acts as a competitive inhibitor in vitro. In terms of biological role, decapping scavenger enzyme that catalyzes the cleavage of a residual cap structure following the degradation of mRNAs of the 3'-&gt;5' exosome-mediated mRNA decay pathway. Hydrolyzes cap analog structures like 7-methylguanosine nucleoside triphosphate (m7GpppG) and tri-methyl guanosine nucleoside triphosphate (m3(2,2,7)GpppG) with up to 2 nucleotide substrates (small capped oligoribonucleotides) and specifically releases 5'-phosphorylated RNA fragments and 7-methylguanosine monophosphate (m7GMP). Does not hydrolyze unmethylated cap analog (GpppG) and shows no decapping activity on intact m7GpppG-capped mRNA molecules. Does not hydrolyze 7-methylguanosine diphosphate (m7GDP) and tri-methylguanosine diphosphate (m3(2,2,7)GDP) to m(7)GMP and m3(2,2,7)GMP, respectively. May also play a role in the 5'-&gt;3 mRNA decay pathway; m7GDP, the downstream product released by the 5'-&gt;3' mRNA mediated decapping activity, may be also converted by dcs-1 to m7GMP. Binds to m7GpppG and strongly to m7GDP. This chain is m7GpppX diphosphatase, found in Ascaris suum (Pig roundworm).